Consider the following 434-residue polypeptide: Serine hydroxymethyltransferase (434 aa).

Residues Leu-133 and 137-139 (GHL) contribute to the (6S)-5,6,7,8-tetrahydrofolate site. An N6-(pyridoxal phosphate)lysine modification is found at Lys-242. Position 366–368 (366–368 (SPF)) interacts with (6S)-5,6,7,8-tetrahydrofolate.

This sequence belongs to the SHMT family. As to quaternary structure, homodimer. It depends on pyridoxal 5'-phosphate as a cofactor.

It is found in the cytoplasm. The enzyme catalyses (6R)-5,10-methylene-5,6,7,8-tetrahydrofolate + glycine + H2O = (6S)-5,6,7,8-tetrahydrofolate + L-serine. Its pathway is one-carbon metabolism; tetrahydrofolate interconversion. The protein operates within amino-acid biosynthesis; glycine biosynthesis; glycine from L-serine: step 1/1. Its function is as follows. Catalyzes the reversible interconversion of serine and glycine with tetrahydrofolate (THF) serving as the one-carbon carrier. This reaction serves as the major source of one-carbon groups required for the biosynthesis of purines, thymidylate, methionine, and other important biomolecules. Also exhibits THF-independent aldolase activity toward beta-hydroxyamino acids, producing glycine and aldehydes, via a retro-aldol mechanism. The sequence is that of Serine hydroxymethyltransferase from Erythrobacter litoralis (strain HTCC2594).